The primary structure comprises 438 residues: UDP-N-acetylmuramoylalanine--D-glutamate ligase (438 aa).

112 to 118 (GSNGKST) provides a ligand contact to ATP.

It belongs to the MurCDEF family.

It localises to the cytoplasm. The catalysed reaction is UDP-N-acetyl-alpha-D-muramoyl-L-alanine + D-glutamate + ATP = UDP-N-acetyl-alpha-D-muramoyl-L-alanyl-D-glutamate + ADP + phosphate + H(+). Its pathway is cell wall biogenesis; peptidoglycan biosynthesis. Cell wall formation. Catalyzes the addition of glutamate to the nucleotide precursor UDP-N-acetylmuramoyl-L-alanine (UMA). The chain is UDP-N-acetylmuramoylalanine--D-glutamate ligase (murD) from Escherichia coli O6:H1 (strain CFT073 / ATCC 700928 / UPEC).